The following is a 389-amino-acid chain: Nucleic acid dioxygenase ALKBH1 (389 aa).

The tract at residues 1–127 (MGKMAAAVAS…CLKLYSQKPN (127 aa)) is interaction with DNAJB6. The tract at residues 86–389 (SKWRAYGLEG…VKRKRLNPNS (304 aa)) is tRNA-binding. Substrate-binding positions include Trp144 and 175 to 177 (YHY). In terms of domain architecture, Fe2OG dioxygenase spans 213–347 (QAEAGILNYY…RVNMTVRQVL (135 aa)). 220–222 (NYY) lines the 2-oxoglutarate pocket. Residues His231, Asp233, and His287 each coordinate Fe cation. Asp233 is a substrate binding site. 338-344 (RVNMTVR) contacts 2-oxoglutarate.

Monomer. Interacts with DNAJB6. It depends on Fe(2+) as a cofactor. In adult organs, highly expressed in testis, eye, brain and kidney.

The protein localises to the nucleus. It carries out the reaction an N(6)-methyl-2'-deoxyadenosine in DNA + 2-oxoglutarate + O2 = a 2'-deoxyadenosine in DNA + formaldehyde + succinate + CO2. It catalyses the reaction 2'-deoxyribonucleotide-(2'-deoxyribose 5'-phosphate)-2'-deoxyribonucleotide-DNA = a 3'-end 2'-deoxyribonucleotide-(2,3-dehydro-2,3-deoxyribose 5'-phosphate)-DNA + a 5'-end 5'-phospho-2'-deoxyribonucleoside-DNA + H(+). The enzyme catalyses a methylated nucleobase within DNA + 2-oxoglutarate + O2 = a nucleobase within DNA + formaldehyde + succinate + CO2. The catalysed reaction is an N(1)-methyladenosine in tRNA + 2-oxoglutarate + O2 = an adenosine in tRNA + formaldehyde + succinate + CO2. It carries out the reaction 5-methylcytidine(34) in mitochondrial tRNA(Met) + 2 2-oxoglutarate + 2 O2 = 5-formylcytidine(34) in mitochondrial tRNA(Met) + 2 succinate + 2 CO2 + H2O. It catalyses the reaction an N(3)-methylcytidine in mRNA + 2-oxoglutarate + O2 = a cytidine in mRNA + formaldehyde + succinate + CO2. The enzyme catalyses N(1)-methyladenosine(58) in tRNA + 2-oxoglutarate + O2 = adenosine(58) in tRNA + formaldehyde + succinate + CO2. Functionally, dioxygenase that acts on nucleic acids, such as DNA and tRNA. Requires molecular oxygen, alpha-ketoglutarate and iron. A number of activities have been described for this dioxygenase, but recent results suggest that it mainly acts on tRNAs and mediates their demethylation or oxidation depending on the context and subcellular compartment. Mainly acts as a tRNA demethylase by removing N(1)-methyladenine from various tRNAs, with a preference for N(1)-methyladenine at position 58 (m1A58) present on a stem loop structure of tRNAs. Acts as a regulator of translation initiation and elongation in response to glucose deprivation: regulates both translation initiation, by mediating demethylation of tRNA(Met), and translation elongation, N(1)-methyladenine-containing tRNAs being preferentially recruited to polysomes to promote translation elongation. In mitochondrion, specifically interacts with mt-tRNA(Met) and mediates oxidation of mt-tRNA(Met) methylated at cytosine(34) to form 5-formylcytosine (f(5)c) at this position. mt-tRNA(Met) containing the f(5)c modification at the wobble position enables recognition of the AUA codon in addition to the AUG codon, expanding codon recognition in mitochondrial translation. Specifically demethylates DNA methylated on the 6th position of adenine (N(6)-methyladenosine) DNA. N(6)-methyladenosine (m6A) DNA is present at some L1 elements in embryonic stem cells and probably promotes their silencing. Demethylates mRNAs containing N(3)-methylcytidine modification. Also able to repair alkylated single-stranded DNA by oxidative demethylation, but with low activity. Also has DNA lyase activity and introduces double-stranded breaks at abasic sites: cleaves both single-stranded DNA and double-stranded DNA at abasic sites, with the greatest activity towards double-stranded DNA with two abasic sites. DNA lyase activity does not require alpha-ketoglutarate and iron and leads to the formation of an irreversible covalent protein-DNA adduct with the 5' DNA product. DNA lyase activity is not required during base excision repair and class switch recombination of the immunoglobulin heavy chain during B lymphocyte activation. May play a role in placental trophoblast lineage differentiation. The polypeptide is Nucleic acid dioxygenase ALKBH1 (Mus musculus (Mouse)).